Here is a 489-residue protein sequence, read N- to C-terminus: NADH-quinone oxidoreductase subunit N (489 aa).

The next 14 helical transmembrane spans lie at 8-28, 35-55, 75-95, 105-125, 127-147, 159-179, 203-223, 235-255, 271-291, 303-323, 329-349, 374-394, 407-427, and 456-476; these read LIAM…MLSI, FTIA…LYYV, FFTA…YPWL, FYML…AHHL, SMFI…GYAF, YMLL…LLYA, VLAG…LFPF, PAPT…AVVM, MILG…ALTQ, VSHL…PILA, IYLA…AVAS, AVVM…LGFI, SLWW…FYYL, and LITL…QPLI.

The protein belongs to the complex I subunit 2 family. In terms of assembly, NDH-1 is composed of 13 different subunits. Subunits NuoA, H, J, K, L, M, N constitute the membrane sector of the complex.

The protein localises to the cell inner membrane. The enzyme catalyses a quinone + NADH + 5 H(+)(in) = a quinol + NAD(+) + 4 H(+)(out). NDH-1 shuttles electrons from NADH, via FMN and iron-sulfur (Fe-S) centers, to quinones in the respiratory chain. The immediate electron acceptor for the enzyme in this species is believed to be ubiquinone. Couples the redox reaction to proton translocation (for every two electrons transferred, four hydrogen ions are translocated across the cytoplasmic membrane), and thus conserves the redox energy in a proton gradient. This chain is NADH-quinone oxidoreductase subunit N, found in Proteus mirabilis (strain HI4320).